A 410-amino-acid chain; its full sequence is Cysteine desulfurase IscS (410 aa).

Residues 80-81 (AT), Asn-160, Gln-188, and 208-210 (SGH) each bind pyridoxal 5'-phosphate. Lys-211 bears the N6-(pyridoxal phosphate)lysine mark. Thr-248 provides a ligand contact to pyridoxal 5'-phosphate. Cys-334 acts as the Cysteine persulfide intermediate in catalysis. Residue Cys-334 coordinates [2Fe-2S] cluster.

Belongs to the class-V pyridoxal-phosphate-dependent aminotransferase family. NifS/IscS subfamily. In terms of assembly, homodimer. Forms a heterotetramer with IscU, interacts with other sulfur acceptors. The cofactor is pyridoxal 5'-phosphate.

Its subcellular location is the cytoplasm. The catalysed reaction is (sulfur carrier)-H + L-cysteine = (sulfur carrier)-SH + L-alanine. The protein operates within cofactor biosynthesis; iron-sulfur cluster biosynthesis. Master enzyme that delivers sulfur to a number of partners involved in Fe-S cluster assembly, tRNA modification or cofactor biosynthesis. Catalyzes the removal of elemental sulfur atoms from cysteine to produce alanine. Functions as a sulfur delivery protein for Fe-S cluster synthesis onto IscU, an Fe-S scaffold assembly protein, as well as other S acceptor proteins. This Rickettsia prowazekii (strain Madrid E) protein is Cysteine desulfurase IscS.